Here is a 499-residue protein sequence, read N- to C-terminus: DAZ protein 1 (499 aa).

Residues 1-29 form a disordered region; sequence MMSPPLRYQKDQQNQQHQQNQSQQAAHQM. A compositionally biased stretch (low complexity) spans 12–28; sequence QQNQQHQQNQSQQAAHQ. The 79-residue stretch at 66-144 folds into the RRM domain; the sequence is PNRIFVGGFP…SRKLNLGPAI (79 aa). A compositionally biased stretch (low complexity) spans 195 to 224; the sequence is FVYPPLRSQDQSRQQSEQQTTPQNSPTNLQ. Disordered regions lie at residues 195–304 and 406–499; these read FVYP…NNGG and YPGN…TKNN. One can recognise a DAZ domain in the interval 214 to 236; the sequence is TTPQNSPTNLQHQQSPQVFFGGD. Residues 251-262 show a composition bias toward basic and acidic residues; it reads EKSEVSPEKHES. Over residues 263-279 the composition is skewed to polar residues; the sequence is VSPQPLLPNQNVLNTQY. Positions 280 to 304 are enriched in low complexity; the sequence is SQGQQQWNSNVQQQQQQQMDSNNGG. Residues 406-425 show a composition bias toward polar residues; it reads YPGNFSQQHTMGNNENTFSL. Positions 438–447 are enriched in basic and acidic residues; the sequence is KPSECQDKKT. Over residues 480-499 the composition is skewed to low complexity; that stretch reads LSPLSASLQSLAISSPTKNN.

Belongs to the RRM DAZ family. Germline specific. More strongly expressed during oogenesis than during spermatogenesis. During the larval stages, it is more abundant at the distal region than the proximal region of the gonad. In young adult hermaphrodites, it is expressed at a very low level in the distal mitotic region of the gonad, and begins to accumulate in the meiotic transition zone. Highly expressed in the proximal pachytene region. Not expressed in mature oocytes. Not expressed in the spermatheca. Weakly or not expressed in the germline of adult males.

Its function is as follows. RNA-binding protein that plays a central role in oogenesis, but not for spermatogenesis. Required for meiotic entry and germline differentiation, at the pachytene stage of meiosis I of female germline regardless of the sex of the soma. May act by regulating translation of specific mRNAs, possibly by binding to their 3'-UTR. In Caenorhabditis elegans, this protein is DAZ protein 1 (daz-1).